The following is a 97-amino-acid chain: Protein RALF-like 2 (97 aa).

An N-terminal signal peptide occupies residues 1–25 (MEARHMLVTILLLSFVFMNIMKVEA). Disulfide bonds link Cys-42–Cys-49 and Cys-61–Cys-67.

It belongs to the plant rapid alkalinization factor (RALF) family.

It is found in the secreted. Functionally, cell signaling peptide that may regulate plant stress, growth, and development. Mediates a rapid alkalinization of extracellular space by mediating a transient increase in the cytoplasmic Ca(2+) concentration leading to a calcium-dependent signaling events through a cell surface receptor and a concomitant activation of some intracellular mitogen-activated protein kinases. The protein is Protein RALF-like 2 (RALFL2) of Arabidopsis thaliana (Mouse-ear cress).